A 609-amino-acid chain; its full sequence is Phosphoprotein 85 (609 aa).

The interval Q461–L609 is disordered. Positions R465–T478 are enriched in low complexity. The span at P484–L495 shows a compositional bias: polar residues. Composition is skewed to low complexity over residues S503 to S513 and S552 to S563. The segment covering R600 to L609 has biased composition (basic and acidic residues).

This sequence belongs to the herpesviridae pp85 family. Post-translationally, phosphorylated.

The protein localises to the virion tegument. It is found in the host cytoplasm. The sequence is that of Phosphoprotein 85 (U14) from Homo sapiens (Human).